We begin with the raw amino-acid sequence, 422 residues long: 5'-deoxyadenosine deaminase (422 aa).

2 residues coordinate Zn(2+): histidine 57 and histidine 59. The substrate site is built by glutamate 86 and histidine 178. Histidine 205 serves as a coordination point for Zn(2+). 2 residues coordinate substrate: glutamate 208 and aspartate 294. Residue aspartate 294 participates in Zn(2+) binding.

This sequence belongs to the metallo-dependent hydrolases superfamily. MTA/SAH deaminase family. In terms of assembly, homotetramer. Zn(2+) serves as cofactor.

The enzyme catalyses 5'-deoxyadenosine + H2O + H(+) = 5'-deoxyinosine + NH4(+). It carries out the reaction S-adenosyl-L-homocysteine + H2O + H(+) = S-inosyl-L-homocysteine + NH4(+). It catalyses the reaction S-methyl-5'-thioadenosine + H2O + H(+) = S-methyl-5'-thioinosine + NH4(+). The catalysed reaction is adenosine + H2O + H(+) = inosine + NH4(+). It functions in the pathway amino-acid biosynthesis; S-adenosyl-L-methionine biosynthesis. Functionally, catalyzes the deamination of three SAM-derived enzymatic products, namely 5'-deoxyadenosine, S-adenosyl-L-homocysteine, and 5'-methylthioadenosine, to produce the inosine analogs. Can also deaminate adenosine. The preferred substrate for this enzyme is 5'-deoxyadenosine, but all these substrates are efficiently deaminated. Likely functions in a S-adenosyl-L-methionine (SAM) recycling pathway from S-adenosyl-L-homocysteine (SAH) produced from SAM-dependent methylation reactions. May also be involved in the recycling of 5'-deoxyadenosine, whereupon the 5'-deoxyribose moiety of 5'-deoxyinosine is further metabolized to deoxyhexoses used for the biosynthesis of aromatic amino acids in methanogens. The polypeptide is 5'-deoxyadenosine deaminase (Methanococcus vannielii (strain ATCC 35089 / DSM 1224 / JCM 13029 / OCM 148 / SB)).